The following is a 438-amino-acid chain: Histidinol dehydrogenase (438 aa).

Positions 138, 199, and 222 each coordinate NAD(+). Ser-245, Gln-267, and His-270 together coordinate substrate. Positions 267 and 270 each coordinate Zn(2+). Residues Glu-335 and His-336 each act as proton acceptor in the active site. Positions 336, 369, 423, and 428 each coordinate substrate. Asp-369 lines the Zn(2+) pocket. His-428 lines the Zn(2+) pocket.

The protein belongs to the histidinol dehydrogenase family. It depends on Zn(2+) as a cofactor.

It catalyses the reaction L-histidinol + 2 NAD(+) + H2O = L-histidine + 2 NADH + 3 H(+). Its pathway is amino-acid biosynthesis; L-histidine biosynthesis; L-histidine from 5-phospho-alpha-D-ribose 1-diphosphate: step 9/9. Its function is as follows. Catalyzes the sequential NAD-dependent oxidations of L-histidinol to L-histidinaldehyde and then to L-histidine. The sequence is that of Histidinol dehydrogenase from Burkholderia lata (strain ATCC 17760 / DSM 23089 / LMG 22485 / NCIMB 9086 / R18194 / 383).